The following is a 208-amino-acid chain: Small ribosomal subunit protein uS4 (208 aa).

The S4 RNA-binding domain occupies 97-158 (TRLDNVIYRM…RAQKYLCVQE (62 aa)).

This sequence belongs to the universal ribosomal protein uS4 family. Part of the 30S ribosomal subunit. Contacts protein S5. The interaction surface between S4 and S5 is involved in control of translational fidelity.

One of the primary rRNA binding proteins, it binds directly to 16S rRNA where it nucleates assembly of the body of the 30S subunit. Its function is as follows. With S5 and S12 plays an important role in translational accuracy. In Xylella fastidiosa (strain M12), this protein is Small ribosomal subunit protein uS4.